We begin with the raw amino-acid sequence, 120 residues long: Ribosome-binding factor A (120 aa).

The protein belongs to the RbfA family. In terms of assembly, monomer. Binds 30S ribosomal subunits, but not 50S ribosomal subunits or 70S ribosomes.

The protein localises to the cytoplasm. In terms of biological role, one of several proteins that assist in the late maturation steps of the functional core of the 30S ribosomal subunit. Associates with free 30S ribosomal subunits (but not with 30S subunits that are part of 70S ribosomes or polysomes). Required for efficient processing of 16S rRNA. May interact with the 5'-terminal helix region of 16S rRNA. The protein is Ribosome-binding factor A of Chlamydia pneumoniae (Chlamydophila pneumoniae).